The primary structure comprises 472 residues: Tubulin gamma chain (472 aa).

142-148 (AGGTGSG) is a GTP binding site.

It belongs to the tubulin family. As to quaternary structure, component of the gamma-tubulin small complex (gamma-TuSC) composed of tubulin gamma chain, gamma-tubulin complex protein 2 (GCP2) and gamma-tubulin complex protein 3 (GCP3). Interacts with GCP2 and GCP3. Interacts with EB1.

Its subcellular location is the cytoplasm. The protein localises to the cytoskeleton. It is found in the flagellum axoneme. It localises to the flagellum basal body. The protein resides in the spindle. Its subcellular location is the microtubule organizing center. Tubulin is the major constituent of microtubules (Potential). The gamma chain is found at microtubule organizing centers (MTOC) such as the centrosome. Component of the gamma-tubulin small complex (gamma-TuSC) involved in microtubule nucleation for the formation of median bodies and in the biogenesis of flagella. Gamma-TuSC may be required for the correct positioning of EB1 within the trophozoites. The protein is Tubulin gamma chain of Giardia intestinalis (strain ATCC 50803 / WB clone C6) (Giardia lamblia).